A 449-amino-acid chain; its full sequence is GTPase Der (449 aa).

EngA-type G domains are found at residues 3–167 and 178–351; these read AVIA…PTSE and PRIA…IDSR. GTP is bound by residues 9-16, 56-60, 119-122, 184-191, 231-235, and 296-299; these read GRPNVGKS, DTGGF, NKMD, DTAGM, and NKWD. Positions 352 to 436 constitute a KH-like domain; it reads RHFSTAELNR…PLRLVFRQGE (85 aa).

It belongs to the TRAFAC class TrmE-Era-EngA-EngB-Septin-like GTPase superfamily. EngA (Der) GTPase family. In terms of assembly, associates with the 50S ribosomal subunit.

Its function is as follows. GTPase that plays an essential role in the late steps of ribosome biogenesis. This chain is GTPase Der, found in Acidithiobacillus ferrooxidans (strain ATCC 23270 / DSM 14882 / CIP 104768 / NCIMB 8455) (Ferrobacillus ferrooxidans (strain ATCC 23270)).